We begin with the raw amino-acid sequence, 652 residues long: Beta-glucuronidase (652 aa).

Residues 1–22 (MVRGPAGAWAVLGPLLWGCGLA) form the signal peptide. Residues asparagine 173 and asparagine 420 are each glycosylated (N-linked (GlcNAc...) asparagine). The active-site Proton donor is glutamate 451. Asparagine 631 carries N-linked (GlcNAc...) asparagine glycosylation.

It belongs to the glycosyl hydrolase 2 family. In terms of assembly, homotetramer.

The protein localises to the lysosome. It catalyses the reaction a beta-D-glucuronoside + H2O = D-glucuronate + an alcohol. Its activity is regulated as follows. Inhibited by L-aspartic acid. In terms of biological role, plays an important role in the degradation of dermatan and keratan sulfates. The sequence is that of Beta-glucuronidase (GUSB) from Sus scrofa (Pig).